A 388-amino-acid chain; its full sequence is Quinolone resistance protein NorA (388 aa).

12 consecutive transmembrane segments (helical) span residues 5–25 (IFVL…VIPV), 42–62 (LLVA…GTLA), 69–89 (LIIC…AVGH), 99–119 (VIGG…IADI), 129–149 (FGYM…IGGF), 157–177 (MPFY…IVLI), 201–221 (WKVF…LSAF), 239–259 (DISI…IYFF), 269–289 (LTFI…LVFA), 293–313 (WSIM…RPAI), 331–351 (LNST…GALF), and 355–375 (IEAP…IVLI).

This sequence belongs to the major facilitator superfamily. TCR/Tet family.

Its subcellular location is the cell membrane. Its function is as follows. Involved in quinolone resistance. May constitute a membrane-associated active efflux pump of hydrophilic quinolones. The protein is Quinolone resistance protein NorA (norA) of Staphylococcus aureus (strain COL).